Consider the following 733-residue polypeptide: Two pore calcium channel protein 1 (733 aa).

Position 1 is an N-acetylmethionine (methionine 1). Residues 1-71 (MEDPLIGRDS…RYYFIFTRLD (71 aa)) lie on the Cytoplasmic side of the membrane. The helical transmembrane segment at 72 to 92 (LIWSLNYFALLFLNFFEQPLW) threads the bilayer. The Vacuolar segment spans residues 93-120 (CEKNPKPSCKDRDYYYLGELPYLTNAES). Residues 121-141 (IIYEVITLAILLVHTFFPISY) traverse the membrane as a helical segment. Over 142–158 (EGSRIFWTSRLNLVKVA) the chain is Cytoplasmic. The helical transmembrane segment at 159-179 (CVVILFVDVLVDFLYLSPLAF) threads the bilayer. Residue aspartate 180 is a topological domain, vacuolar. The chain crosses the membrane as a helical; Voltage-sensor span at residues 181 to 199 (FLPFRIAPYVRVIIFILSI). Over 200–218 (RELRDTLVLLSGMLGTYLN) the chain is Cytoplasmic. A helical transmembrane segment spans residues 219 to 239 (ILALWMLFLLFASWIAFVMFE). Residues 240 to 245 (DTQQGL) lie on the Vacuolar side of the membrane. The pore-forming intramembrane region spans 246–260 (TVFTSYGATLYQMFI). The Vacuolar segment spans residues 261-282 (LFTTSNNPDVWIPAYKSSRWSS). Residues 283–303 (VFFVLYVLIGVYFVTNLILAV) form a helical membrane-spanning segment. Topologically, residues 304-428 (VYDSFKEQLA…LSQQLRAFVR (125 aa)) are cytoplasmic. 2 consecutive EF-hand domains span residues 322–357 (MKRRMLEKAFGLIDSDKNGEIDKNQCIKLFEQLTNY) and 363–398 (ISKEEFGLIFDELDDTRDFKINKDEFADLCQAIALR). The helical transmembrane segment at 429-449 (SPNFGYAISFILIINFIAVVV) threads the bilayer. Residues 450 to 465 (ETTLDIEESSAQKPWQ) lie on the Vacuolar side of the membrane. The helical transmembrane segment at 466–486 (VAEFVFGWIYVLEMALKIYTY) threads the bilayer. Over 487–498 (GFENYWREGANR) the chain is Cytoplasmic. The helical transmembrane segment at 499 to 519 (FDFLVTWVIVIGETATFITPD) threads the bilayer. Residues 520 to 528 (ENTFFSNGE) are Vacuolar-facing. The helical; Voltage-sensor transmembrane segment at 529 to 546 (WIRYLLLARMLRLIRLLM) threads the bilayer. Topologically, residues 547-557 (NVQRYRAFIAT) are cytoplasmic. Residues 558 to 578 (FITLIPSLMPYLGTIFCVLCI) traverse the membrane as a helical segment. Over 579–615 (YCSIGVQVFGGLVNAGNKKLFETELAEDDYLLFNFND) the chain is Vacuolar. The segment at residues 616–630 (YPNGMVTLFNLLVMG) is an intramembrane region (pore-forming). Over 631 to 651 (NWQVWMESYKDLTGTWWSITY) the chain is Vacuolar. Residues 652 to 672 (FVSFYVITILLLLNLVVAFVL) form a helical membrane-spanning segment. Over 673 to 733 (EAFFTELDLE…SKPECSTSDT (61 aa)) the chain is Cytoplasmic. The span at 686-695 (KCQGQDSQEK) shows a compositional bias: basic and acidic residues. The disordered stretch occupies residues 686-711 (KCQGQDSQEKRNRRRSAGSKSRSQRV).

This sequence belongs to the calcium channel alpha-1 subunit (TC 1.A.1.11) family. Two pore calcium channel subfamily. In terms of assembly, homodimer. As to expression, ubiquitously expressed.

It localises to the vacuole membrane. Its activity is regulated as follows. Inhibited by Al(3+). Functionally, functions as a voltage-gated inward-rectifying Ca(2+) channel (VDCC) across the vacuole membrane. Is one of the essential components of the slow vacuolar (SV) channel. Acts as the major ROS-responsive Ca(2+) channel and is the possible target of Al-dependent inhibition. Involved in the regulation of germination and stomatal movement. This chain is Two pore calcium channel protein 1 (TPC1), found in Arabidopsis thaliana (Mouse-ear cress).